The following is a 510-amino-acid chain: Flavonoid 3',5'-hydroxylase (510 aa).

Cys-447 serves as a coordination point for heme.

This sequence belongs to the cytochrome P450 family. Heme serves as cofactor.

The enzyme catalyses a 3',5'-unsubstituted flavanone + 2 reduced [NADPH--hemoprotein reductase] + 2 O2 = a 3',5'-dihydroxyflavanone + 2 oxidized [NADPH--hemoprotein reductase] + 2 H2O + 2 H(+). The protein operates within pigment biosynthesis; anthocyanin biosynthesis. In terms of biological role, catalyzes the 3'5'-hydroxylation of naringenin and eriodictyol to form 5,7,3,'4',5'-pentahydroxyflavanone and 3',5'-hydroxylation of dihydrokaempferol and dihydroquercetin to form dihydromyricetin. This is Flavonoid 3',5'-hydroxylase (CYP75A5) from Eustoma exaltatum subsp. russellianum (Bluebells).